The following is an 82-amino-acid chain: Small ribosomal subunit protein bS16 (82 aa).

The protein belongs to the bacterial ribosomal protein bS16 family.

In Vibrio campbellii (strain ATCC BAA-1116), this protein is Small ribosomal subunit protein bS16.